We begin with the raw amino-acid sequence, 492 residues long: Cholesteryl ester transfer protein (492 aa).

The signal sequence occupies residues 1–17 (MLAVTLLSLALLGSTCA). Cysteine 160 and cysteine 201 form a disulfide bridge. N-linked (GlcNAc...) asparagine glycosylation is present at asparagine 257.

It belongs to the BPI/LBP/Plunc superfamily. BPI/LBP family.

Its subcellular location is the secreted. The enzyme catalyses cholesteryl (9Z-octadecenoate)(in) = cholesteryl (9Z-octadecenoate)(out). The catalysed reaction is 1,2,3-tri-(9Z-octadecenoyl)-glycerol(in) = 1,2,3-tri-(9Z-octadecenoyl)-glycerol(out). It carries out the reaction cholesteryl (9Z,12Z)-octadecadienoate(in) = cholesteryl (9Z,12Z)-octadecadienoate(out). Functionally, involved in the transfer of neutral lipids, including cholesteryl ester and triglyceride, among lipoprotein particles. Allows the net movement of cholesteryl ester from high density lipoproteins/HDL to triglyceride-rich very low density lipoproteins/VLDL, and the equimolar transport of triglyceride from VLDL to HDL. Regulates the reverse cholesterol transport, by which excess cholesterol is removed from peripheral tissues and returned to the liver for elimination. The chain is Cholesteryl ester transfer protein from Cricetulus griseus (Chinese hamster).